A 40-amino-acid chain; its full sequence is Photosystem II reaction center protein J (40 aa).

A helical membrane pass occupies residues 8–28 (IPLWLIGTVTGILVIGLIGFF).

Belongs to the PsbJ family. PSII is composed of 1 copy each of membrane proteins PsbA, PsbB, PsbC, PsbD, PsbE, PsbF, PsbH, PsbI, PsbJ, PsbK, PsbL, PsbM, PsbT, PsbX, PsbY, PsbZ, Psb30/Ycf12, at least 3 peripheral proteins of the oxygen-evolving complex and a large number of cofactors. It forms dimeric complexes.

The protein resides in the plastid. The protein localises to the chloroplast thylakoid membrane. One of the components of the core complex of photosystem II (PSII). PSII is a light-driven water:plastoquinone oxidoreductase that uses light energy to abstract electrons from H(2)O, generating O(2) and a proton gradient subsequently used for ATP formation. It consists of a core antenna complex that captures photons, and an electron transfer chain that converts photonic excitation into a charge separation. The protein is Photosystem II reaction center protein J of Zea mays (Maize).